The sequence spans 62 residues: Sperm protamine P1 (62 aa).

Positions 1–62 (MARYRHSRSR…RYSRRRRRRY (62 aa)) are disordered.

It belongs to the protamine P1 family. Testis.

It is found in the nucleus. The protein resides in the chromosome. In terms of biological role, protamines substitute for histones in the chromatin of sperm during the haploid phase of spermatogenesis. They compact sperm DNA into a highly condensed, stable and inactive complex. The polypeptide is Sperm protamine P1 (PRM1) (Notamacropus eugenii (Tammar wallaby)).